Reading from the N-terminus, the 1407-residue chain is DNA-directed RNA polymerase subunit beta' (1407 aa).

4 residues coordinate Zn(2+): C70, C72, C85, and C88. The Mg(2+) site is built by D460, D462, and D464. 4 residues coordinate Zn(2+): C814, C888, C895, and C898.

It belongs to the RNA polymerase beta' chain family. The RNAP catalytic core consists of 2 alpha, 1 beta, 1 beta' and 1 omega subunit. When a sigma factor is associated with the core the holoenzyme is formed, which can initiate transcription. The cofactor is Mg(2+). Zn(2+) serves as cofactor.

It carries out the reaction RNA(n) + a ribonucleoside 5'-triphosphate = RNA(n+1) + diphosphate. In terms of biological role, DNA-dependent RNA polymerase catalyzes the transcription of DNA into RNA using the four ribonucleoside triphosphates as substrates. In Citrobacter koseri (strain ATCC BAA-895 / CDC 4225-83 / SGSC4696), this protein is DNA-directed RNA polymerase subunit beta'.